The sequence spans 296 residues: Origin of replication complex subunit 6 (296 aa).

The tract at residues 212-296 (PSKRKHDDDS…MALEVSSAAN (85 aa)) is disordered. Positions 220–236 (DSDSSGESSGDDQDELD) are enriched in acidic residues. The segment covering 254 to 264 (WKSSVLSSNKQ) has biased composition (polar residues).

This sequence belongs to the ORC6 family. As to quaternary structure, component of the origin recognition complex (ORC) composed of at least ORC1, ORC2, ORC3, ORC4, ORC5 and ORC6. ORC is regulated in a cell-cycle and development dependent manner. It is sequentially assembled at the exit from anaphase of mitosis and disassembled as cells enter S phase.

The protein localises to the nucleus. Its function is as follows. Component of the origin recognition complex (ORC) that binds origins of replication. DNA-binding is ATP-dependent. The specific DNA sequences that define origins of replication have not been identified yet. ORC is required to assemble the pre-replication complex necessary to initiate DNA replication. The protein is Origin of replication complex subunit 6 of Oryza sativa subsp. indica (Rice).